The following is a 377-amino-acid chain: MIQLLMAAGLGLVFSIFGTPALIKVLARHGYGQYIRDDGPTSHQTKRGTPTMGGVAILLSVVAAYLVTHLISVLAWPENGGITLSGLLALGLMLGMGMVGFLDDYKKISKKQNLGLTAAGKMVLQGAIGSAFAVLVLFFPDAAGNTPASTAISWTRDTGVDLAFAGPVVGLILFVVWVNLIATGTTNAVNLTDGLDGLATGASILVFSGYMLITLWQAGHLCENAAQAACYAVRDPMDLSIVAAALVGALIGFLWWNTSPAKIFMGDTGSLGLGGALAAFAVLSRTELLLVLIAGLFVVITMSVILQVGYFKLSHGKRIFKMAPLQHHFELKGWQEVTIVVRFWVIAGLFVAAALGVFYGDWLLHNGGAFPGAEALH.

Helical transmembrane passes span 2–22 (IQLLMAAGLGLVFSIFGTPAL), 55–75 (VAILLSVVAAYLVTHLISVLA), 82–102 (ITLSGLLALGLMLGMGMVGFL), 122–142 (MVLQGAIGSAFAVLVLFFPDA), 162–182 (LAFAGPVVGLILFVVWVNLIA), 195–215 (LDGLATGASILVFSGYMLITL), 236–256 (PMDLSIVAAALVGALIGFLWW), 263–283 (IFMGDTGSLGLGGALAAFAVL), 288–308 (LLLVLIAGLFVVITMSVILQV), and 343–363 (FWVIAGLFVAAALGVFYGDWL).

The protein belongs to the glycosyltransferase 4 family. MraY subfamily. The cofactor is Mg(2+).

The protein localises to the cell membrane. The catalysed reaction is UDP-N-acetyl-alpha-D-muramoyl-L-alanyl-gamma-D-glutamyl-meso-2,6-diaminopimeloyl-D-alanyl-D-alanine + di-trans,octa-cis-undecaprenyl phosphate = di-trans,octa-cis-undecaprenyl diphospho-N-acetyl-alpha-D-muramoyl-L-alanyl-D-glutamyl-meso-2,6-diaminopimeloyl-D-alanyl-D-alanine + UMP. Its pathway is cell wall biogenesis; peptidoglycan biosynthesis. Functionally, catalyzes the initial step of the lipid cycle reactions in the biosynthesis of the cell wall peptidoglycan: transfers peptidoglycan precursor phospho-MurNAc-pentapeptide from UDP-MurNAc-pentapeptide onto the lipid carrier undecaprenyl phosphate, yielding undecaprenyl-pyrophosphoryl-MurNAc-pentapeptide, known as lipid I. This Kocuria rhizophila (strain ATCC 9341 / DSM 348 / NBRC 103217 / DC2201) protein is Phospho-N-acetylmuramoyl-pentapeptide-transferase.